A 261-amino-acid chain; its full sequence is Putative outer membrane protein CT_371 (261 aa).

The N-terminal stretch at 1-18 is a signal peptide; the sequence is MRLCFILFLLLSPLISEA.

The protein resides in the cell outer membrane. The sequence is that of Putative outer membrane protein CT_371 from Chlamydia trachomatis serovar D (strain ATCC VR-885 / DSM 19411 / UW-3/Cx).